The chain runs to 126 residues: MNEKARLLRIRARLKRKKPRFLRQEWWRYPKFKNDPKWRRPKGIDSKMRLKKKGKARSPSIGWSSPRLVRGLHPSGYEEVLVHNVKELEAIDPARQAARIARTVGARKREMILARAKELGVKVLNP.

The protein belongs to the eukaryotic ribosomal protein eL32 family.

The protein is Large ribosomal subunit protein eL32 of Thermococcus onnurineus (strain NA1).